A 163-amino-acid polypeptide reads, in one-letter code: Nucleotide-binding protein BSU11020 (163 aa).

Belongs to the YajQ family.

Its function is as follows. Nucleotide-binding protein. The chain is Nucleotide-binding protein BSU11020 (yitK) from Bacillus subtilis (strain 168).